The chain runs to 553 residues: Rhodopsin kinase GRK7 (553 aa).

The residue at position 36 (Ser-36) is a Phosphoserine; by PKA. The 121-residue stretch at 56–176 (FHSLCEQQPI…VTSAFYDKFL (121 aa)) folds into the RGS domain. The Protein kinase domain occupies 191–454 (FTEFRVLGKG…SDDPRKHHFF (264 aa)). ATP contacts are provided by residues 197-205 (LGKGGFGEV) and Lys-220. The Proton acceptor role is filled by Asp-316. In terms of domain architecture, AGC-kinase C-terminal spans 455 to 520 (KTINFPRLEA…GAVPIAWQEE (66 aa)). Cysteine methyl ester is present on Cys-550. Residue Cys-550 is the site of S-geranylgeranyl cysteine attachment. A propeptide spans 551-553 (LLL) (removed in mature form).

It belongs to the protein kinase superfamily. AGC Ser/Thr protein kinase family. GPRK subfamily. In terms of assembly, interacts (when prenylated) with PDE6D; this promotes release from membranes. Post-translationally, autophosphorylated in vitro at Ser-490. Phosphorylation at Ser-36 is regulated by light and activated by cAMP. As to expression, retinal cones, outer and inner segments.

The protein localises to the membrane. It carries out the reaction L-threonyl-[rhodopsin] + ATP = O-phospho-L-threonyl-[rhodopsin] + ADP + H(+). The catalysed reaction is L-seryl-[rhodopsin] + ATP = O-phospho-L-seryl-[rhodopsin] + ADP + H(+). Inhibited by phosphorylation of Ser-36. Retina-specific kinase involved in the shutoff of the photoresponse and adaptation to changing light conditions via cone opsin phosphorylation, including rhodopsin (RHO). This is Rhodopsin kinase GRK7 (GRK7) from Homo sapiens (Human).